We begin with the raw amino-acid sequence, 365 residues long: Glucan endo-1,3-beta-glucosidase, basic vacuolar isoform (365 aa).

A signal peptide spans Met-1 to Ala-32. Residue Glu-128 is the Proton donor of the active site. Glu-273 acts as the Nucleophile in catalysis. The propeptide at Val-349 to Ile-365 is removed in mature form. N-linked (GlcNAc...) asparagine glycosylation is present at Asn-356.

Belongs to the glycosyl hydrolase 17 family.

The protein localises to the vacuole. It catalyses the reaction Hydrolysis of (1-&gt;3)-beta-D-glucosidic linkages in (1-&gt;3)-beta-D-glucans.. In terms of biological role, implicated in the defense of plants against pathogens. This is Glucan endo-1,3-beta-glucosidase, basic vacuolar isoform (GN2) from Nicotiana plumbaginifolia (Leadwort-leaved tobacco).